Here is a 179-residue protein sequence, read N- to C-terminus: MAELATIARPYAEALFRVAEGGDIAAWSTLVQELAQVARLPEVLSVASSPKVTRTQVAELLLAAAKSPLAAGAEAKNFVQMLVDNHRIALLPEIAEQFEALKNEREGAADAEIVSAFPLNGADLDSLVSGLERKFKRKLKPTVEVDSSLIGGVRVTVGDEVLDTSVRARLASMQAALTA.

The protein belongs to the ATPase delta chain family. In terms of assembly, F-type ATPases have 2 components, F(1) - the catalytic core - and F(0) - the membrane proton channel. F(1) has five subunits: alpha(3), beta(3), gamma(1), delta(1), epsilon(1). F(0) has three main subunits: a(1), b(2) and c(10-14). The alpha and beta chains form an alternating ring which encloses part of the gamma chain. F(1) is attached to F(0) by a central stalk formed by the gamma and epsilon chains, while a peripheral stalk is formed by the delta and b chains.

It is found in the cell inner membrane. F(1)F(0) ATP synthase produces ATP from ADP in the presence of a proton or sodium gradient. F-type ATPases consist of two structural domains, F(1) containing the extramembraneous catalytic core and F(0) containing the membrane proton channel, linked together by a central stalk and a peripheral stalk. During catalysis, ATP synthesis in the catalytic domain of F(1) is coupled via a rotary mechanism of the central stalk subunits to proton translocation. Its function is as follows. This protein is part of the stalk that links CF(0) to CF(1). It either transmits conformational changes from CF(0) to CF(1) or is implicated in proton conduction. The chain is ATP synthase subunit delta from Burkholderia cenocepacia (strain ATCC BAA-245 / DSM 16553 / LMG 16656 / NCTC 13227 / J2315 / CF5610) (Burkholderia cepacia (strain J2315)).